The following is a 610-amino-acid chain: NTPase KAP family P-loop domain-containing protein 1 (610 aa).

The KAP NTPase domain maps to Met1–Leu414. 3 consecutive transmembrane segments (helical) span residues Ala22–Ile42, Val118–Leu138, and Val157–Val177. The interval Ala540–Ala587 is disordered. Over residues Arg560–Gly575 the composition is skewed to low complexity.

Its subcellular location is the membrane. The sequence is that of NTPase KAP family P-loop domain-containing protein 1 (NKPD1) from Homo sapiens (Human).